The primary structure comprises 536 residues: Sensory rhodopsin I transducer (536 aa).

At 2 to 14 (TIAWARRRYGVKL) the chain is on the cytoplasmic side. Residues 15-29 (GLGYIATAGLLVGVG) traverse the membrane as a helical segment. At 30-39 (VTTNDVPSTI) the chain is on the extracellular side. Residues 40-55 (VAGIAGLLTLGSINAA) traverse the membrane as a helical segment. Residues 55-107 (AETVASIKEIAAQTERVANGNLEQEVTSTRTDEFGSLADSIEQMRQSLRGRLN) form the HAMP 1 domain. Over 56–536 (ETVASIKEIA…MRAGADGGGA (481 aa)) the chain is Cytoplasmic. The disordered stretch occupies residues 116–145 (LEETQAEAETAREEAEQAKQEAQAAEREAR). Over residues 124-145 (ETAREEAEQAKQEAQAAEREAR) the composition is skewed to basic and acidic residues. The HAMP 2 domain maps to 149-202 (ATYQDTAKRYGETMEAAATGDLTQRVDVDTDHEAMETVGTAFNQMMDDLQATVR). The Methyl-accepting transducer domain maps to 221-459 (TSADIEASAG…STATSVERVA (239 aa)). At E266 the chain carries Glutamate methyl ester (Glu). A disordered region spans residues 278–307 (SEDVATASDAARDSSKSALDEMSSIETEVD). Positions 287 to 296 (AARDSSKSAL) are enriched in basic and acidic residues. Residue E473 is modified to Glutamate methyl ester (Glu). A disordered region spans residues 512–536 (TEDSETAGGSVEQPVMRAGADGGGA).

This sequence belongs to the methyl-accepting chemotaxis (MCP) protein family. Post-translationally, methylated by CheR.

The protein localises to the cell membrane. Its function is as follows. Transduces signals from the phototaxis receptor sensory rhodopsin I (SR-I) to the flagellar motor. Responds to light changes through the variation of the level of methylation. This Halobacterium salinarum (strain ATCC 29341 / DSM 671 / R1) protein is Sensory rhodopsin I transducer (htr1).